The sequence spans 99 residues: Cell division protein FtsB (99 aa).

The Cytoplasmic portion of the chain corresponds to methionine 1–phenylalanine 3. Residues phenylalanine 4–serine 21 form a helical membrane-spanning segment. At glycine 22–glutamine 99 the chain is on the periplasmic side. Residues valine 31 to asparagine 73 adopt a coiled-coil conformation.

It belongs to the FtsB family. Part of a complex composed of FtsB, FtsL and FtsQ.

It localises to the cell inner membrane. Essential cell division protein. May link together the upstream cell division proteins, which are predominantly cytoplasmic, with the downstream cell division proteins, which are predominantly periplasmic. The sequence is that of Cell division protein FtsB from Shewanella sp. (strain MR-4).